The sequence spans 449 residues: Heterogeneous nuclear ribonucleoprotein H (449 aa).

The residue at position 1 (Met-1) is an N-acetylmethionine. Met-2 carries the post-translational modification N-acetylmethionine; in Heterogeneous nuclear ribonucleoprotein H, N-terminally processed. The 80-residue stretch at Phe-11–Asn-90 folds into the RRM 1 domain. Ser-23 carries the phosphoserine modification. Lys-35 is covalently cross-linked (Glycyl lysine isopeptide (Lys-Gly) (interchain with G-Cter in SUMO2)). A phosphoserine mark is found at Ser-54 and Ser-63. Residues Lys-87 and Lys-98 each participate in a glycyl lysine isopeptide (Lys-Gly) (interchain with G-Cter in SUMO2) cross-link. Residues Gly-111–Arg-188 enclose the RRM 2 domain. Arg-233 bears the Dimethylated arginine; alternate mark. Arg-233 bears the Omega-N-methylarginine; alternate mark. The 1-1 repeat unit spans residues Gly-234–Tyr-249. The 2 X 16 AA Gly-rich approximate repeats stretch occupies residues Gly-234–Tyr-433. A Phosphotyrosine modification is found at Tyr-246. The region spanning His-289–Thr-364 is the RRM 3 domain. Phosphoserine is present on Ser-310. Repeat copies occupy residues His-354–Tyr-372, His-374–Tyr-392, and Gly-418–Tyr-433. A 2 X 19 AA perfect repeats region spans residues His-354–Tyr-392.

In terms of assembly, part of a ternary complex containing FUBP2, PTBP1, PTBP2 and HNRNPH1. Identified in the spliceosome C complex. Interacts with IGF2BP1. Interacts with CUGBP1; the interaction is RNA-dependent. Interacts with MBNL1; the interaction in RNA-independent.

It is found in the nucleus. The protein localises to the nucleoplasm. Functionally, this protein is a component of the heterogeneous nuclear ribonucleoprotein (hnRNP) complexes which provide the substrate for the processing events that pre-mRNAs undergo before becoming functional, translatable mRNAs in the cytoplasm. Mediates pre-mRNA alternative splicing regulation. Inhibits, together with CUGBP1, insulin receptor (IR) pre-mRNA exon 11 inclusion in myoblast. Binds to the IR RNA. Binds poly(RG). The chain is Heterogeneous nuclear ribonucleoprotein H (Hnrnph1) from Mus musculus (Mouse).